The following is a 1931-amino-acid chain: Cytadherence high molecular weight protein 2 (1931 aa).

Coiled coils occupy residues 1626-1659, 1768-1846, and 1903-1930; these read KEHQ…LTES, FNTQ…IKTN, and HAKK…KQTS.

Component of the cytoskeleton-like structure which stabilizes the shape of the wall-less Mycoplasma. This cytoskeleton-like network of accessory proteins containing HMW proteins 1 to 5 allows the proper anchoring of cytadhesin proteins in the mycoplasmal membrane at the attachment organelle. The protein is Cytadherence high molecular weight protein 2 (hlp2) of Mycoplasmoides gallisepticum (strain R(low / passage 15 / clone 2)) (Mycoplasma gallisepticum).